A 360-amino-acid chain; its full sequence is Phospho-N-acetylmuramoyl-pentapeptide-transferase (360 aa).

A run of 10 helical transmembrane segments spans residues 26–46 (AILG…KLIE), 74–94 (MGGL…GDLG), 97–117 (YVWV…IDDY), 134–154 (YILQ…TAAN), 168–188 (VMPQ…VGSS), 199–219 (GLAI…AYLS), 236–256 (SGEL…FLWF), 263–283 (VFMG…IAVL), 288–308 (ILLV…ILQV), and 338–358 (VIVR…ATLK).

This sequence belongs to the glycosyltransferase 4 family. MraY subfamily. It depends on Mg(2+) as a cofactor.

It is found in the cell inner membrane. It carries out the reaction UDP-N-acetyl-alpha-D-muramoyl-L-alanyl-gamma-D-glutamyl-meso-2,6-diaminopimeloyl-D-alanyl-D-alanine + di-trans,octa-cis-undecaprenyl phosphate = di-trans,octa-cis-undecaprenyl diphospho-N-acetyl-alpha-D-muramoyl-L-alanyl-D-glutamyl-meso-2,6-diaminopimeloyl-D-alanyl-D-alanine + UMP. It functions in the pathway cell wall biogenesis; peptidoglycan biosynthesis. Functionally, catalyzes the initial step of the lipid cycle reactions in the biosynthesis of the cell wall peptidoglycan: transfers peptidoglycan precursor phospho-MurNAc-pentapeptide from UDP-MurNAc-pentapeptide onto the lipid carrier undecaprenyl phosphate, yielding undecaprenyl-pyrophosphoryl-MurNAc-pentapeptide, known as lipid I. In Shewanella oneidensis (strain ATCC 700550 / JCM 31522 / CIP 106686 / LMG 19005 / NCIMB 14063 / MR-1), this protein is Phospho-N-acetylmuramoyl-pentapeptide-transferase.